The sequence spans 403 residues: Protein-glutamate methylesterase/protein-glutamine glutaminase (403 aa).

The 119-residue stretch at 8–126 (AVLIVDDSAL…SAHLRTVSRK (119 aa)) folds into the Response regulatory domain. 4-aspartylphosphate is present on D59. In terms of domain architecture, CheB-type methylesterase spans 204 to 393 (PLRESGALQI…VSLDDMAATI (190 aa)). Residues S219, H246, and D342 contribute to the active site.

This sequence belongs to the CheB family. In terms of processing, phosphorylated by CheA. Phosphorylation of the N-terminal regulatory domain activates the methylesterase activity.

The protein resides in the cytoplasm. The enzyme catalyses [protein]-L-glutamate 5-O-methyl ester + H2O = L-glutamyl-[protein] + methanol + H(+). It catalyses the reaction L-glutaminyl-[protein] + H2O = L-glutamyl-[protein] + NH4(+). In terms of biological role, involved in chemotaxis. Part of a chemotaxis signal transduction system that modulates chemotaxis in response to various stimuli. Catalyzes the demethylation of specific methylglutamate residues introduced into the chemoreceptors (methyl-accepting chemotaxis proteins or MCP) by CheR. Also mediates the irreversible deamidation of specific glutamine residues to glutamic acid. This is Protein-glutamate methylesterase/protein-glutamine glutaminase from Treponema pallidum (strain Nichols).